A 297-amino-acid chain; its full sequence is Homoserine kinase (297 aa).

Residue 82 to 92 (PLTRGLGSSAS) coordinates ATP.

It belongs to the GHMP kinase family. Homoserine kinase subfamily.

Its subcellular location is the cytoplasm. It catalyses the reaction L-homoserine + ATP = O-phospho-L-homoserine + ADP + H(+). It functions in the pathway amino-acid biosynthesis; L-threonine biosynthesis; L-threonine from L-aspartate: step 4/5. Catalyzes the ATP-dependent phosphorylation of L-homoserine to L-homoserine phosphate. The protein is Homoserine kinase of Bacillus cereus (strain B4264).